Consider the following 98-residue polypeptide: MTTMFFNLLLAFMVALMGVYIYREHLMSTLLCLEGMMLSIFIMVSLTLLHHHLNSTMMFPLILLVFSACEAGVGLALLVKTSNSYGTDYIDNLNLLQC.

3 consecutive transmembrane segments (helical) span residues 1–21, 29–49, and 59–79; these read MTTM…GVYI, TLLC…LTLL, and FPLI…ALLV.

This sequence belongs to the complex I subunit 4L family. In terms of assembly, core subunit of respiratory chain NADH dehydrogenase (Complex I) which is composed of 45 different subunits.

The protein localises to the mitochondrion inner membrane. The enzyme catalyses a ubiquinone + NADH + 5 H(+)(in) = a ubiquinol + NAD(+) + 4 H(+)(out). Core subunit of the mitochondrial membrane respiratory chain NADH dehydrogenase (Complex I) which catalyzes electron transfer from NADH through the respiratory chain, using ubiquinone as an electron acceptor. Part of the enzyme membrane arm which is embedded in the lipid bilayer and involved in proton translocation. This is NADH-ubiquinone oxidoreductase chain 4L (MT-ND4L) from Zaglossus bruijni (Western long-beaked echidna).